The following is a 105-amino-acid chain: UPF0145 protein VP1283 (105 aa).

It belongs to the UPF0145 family.

The sequence is that of UPF0145 protein VP1283 from Vibrio parahaemolyticus serotype O3:K6 (strain RIMD 2210633).